Consider the following 329-residue polypeptide: ATP-dependent (S)-NAD(P)H-hydrate dehydratase (329 aa).

A mitochondrion-targeting transit peptide spans 1-28; the sequence is MALGPGCRAVRGCRPVLKRAFSLHKAHS. The YjeF C-terminal domain maps to 35–326; sequence ILQLVRSVVP…AEVGPAFRRL (292 aa). An N6-acetyllysine modification is found at Lys49. The residue at position 67 (Tyr67) is a Phosphotyrosine. Residues Gly135 and 188 to 194 contribute to the (6S)-NADPHX site; that span reads NHVEFGR. ATP contacts are provided by residues 228–232 and 247–256; these read KGEQD and GSGRRCGGQG. A (6S)-NADPHX-binding site is contributed by Asp257.

Belongs to the NnrD/CARKD family. It depends on Mg(2+) as a cofactor.

It is found in the mitochondrion. The enzyme catalyses (6S)-NADHX + ATP = ADP + phosphate + NADH + H(+). It catalyses the reaction (6S)-NADPHX + ATP = ADP + phosphate + NADPH + H(+). Catalyzes the dehydration of the S-form of NAD(P)HX at the expense of ATP, which is converted to ADP. Together with NAD(P)HX epimerase, which catalyzes the epimerization of the S- and R-forms, the enzyme allows the repair of both epimers of NAD(P)HX, a damaged form of NAD(P)H that is a result of enzymatic or heat-dependent hydration. The polypeptide is ATP-dependent (S)-NAD(P)H-hydrate dehydratase (Bos taurus (Bovine)).